Here is a 493-residue protein sequence, read N- to C-terminus: Argininosuccinate lyase (493 aa).

It belongs to the lyase 1 family. Argininosuccinate lyase subfamily.

The protein resides in the cytoplasm. It carries out the reaction 2-(N(omega)-L-arginino)succinate = fumarate + L-arginine. It functions in the pathway amino-acid biosynthesis; L-arginine biosynthesis; L-arginine from L-ornithine and carbamoyl phosphate: step 3/3. This Clavibacter sepedonicus (Clavibacter michiganensis subsp. sepedonicus) protein is Argininosuccinate lyase.